A 100-amino-acid polypeptide reads, in one-letter code: uncharacterized protein (100 aa).

In terms of assembly, may interact with ribosomes.

This is an uncharacterized protein from Saccharomyces cerevisiae (strain ATCC 204508 / S288c) (Baker's yeast).